Consider the following 421-residue polypeptide: Thymidine phosphorylase (421 aa).

It belongs to the thymidine/pyrimidine-nucleoside phosphorylase family. As to quaternary structure, homodimer.

It catalyses the reaction thymidine + phosphate = 2-deoxy-alpha-D-ribose 1-phosphate + thymine. In terms of biological role, the enzymes which catalyze the reversible phosphorolysis of pyrimidine nucleosides are involved in the degradation of these compounds and in their utilization as carbon and energy sources, or in the rescue of pyrimidine bases for nucleotide synthesis. The chain is Thymidine phosphorylase (deoA) from Mycoplasma pneumoniae (strain ATCC 29342 / M129 / Subtype 1) (Mycoplasmoides pneumoniae).